A 970-amino-acid chain; its full sequence is Type III restriction-modification enzyme EcoPI Res subunit (970 aa).

Residues 75–540 are helicase-like domain; it reads ARSNVIDVSM…EVGRGLRLPV (466 aa). An endonuclease domain region spans residues 894 to 918; sequence TYSPDFAYVVKTAEGDYLNFIIETK.

Belongs to the type III restriction-modification system Res protein family. As to quaternary structure, a heterotetramer with stoichiometry Res(2)Mod(2). Mg(2+) is required as a cofactor. The cofactor is S-adenosyl-L-methionine.

It catalyses the reaction Endonucleolytic cleavage of DNA to give specific double-stranded fragments with terminal 5'-phosphates.. Its function is as follows. A type III restriction enzyme that recognizes 2 inversely oriented double-stranded sequences 5'-AGACC-3' and cleaves DNA 25-27 base pairs downstream of one site, producing a single-strand 5' protrusion of two nucleotides. DNA restriction requires both the Res and Mod subunits. DNA topology affects its action; relaxed and negatively supercoiled DNA are digested but positively supercoiled DNA is not a good substrate. After binding to one recognition site undergoes random one-dimensional diffusion along DNA until it collides with a stationary enzyme bound to the second DNA site, which is when DNA cleavage occurs. The sequence is that of Type III restriction-modification enzyme EcoPI Res subunit from Enterobacteriaceae (Bacteriophage P1).